The chain runs to 1164 residues: Phospholipid-transporting ATPase IA (1164 aa).

Topologically, residues 1-75 (MPTMRRTVSE…PRFLYSQFRR (75 aa)) are cytoplasmic. The residue at position 25 (serine 25) is a Phosphoserine. Threonine 28 carries the post-translational modification Phosphothreonine. The residue at position 29 (serine 29) is a Phosphoserine. A helical transmembrane segment spans residues 76–96 (AANSFFLFIALLQQIPDVSPT). The Exoplasmic loop portion of the chain corresponds to 97–100 (GRYT). Residues 101 to 121 (TLVPLLFILAVAAIKEIIEDI) traverse the membrane as a helical segment. The Cytoplasmic portion of the chain corresponds to 122–297 (KRHKADNAVN…SNVERITNVQ (176 aa)). A helical transmembrane segment spans residues 298–318 (ILILFCILIAMSLVCSVGSAI). At 319 to 339 (WNRRHSGKDWYLHLHYGGASN) the chain is on the exoplasmic loop side. A helical transmembrane segment spans residues 340-360 (FGLNFLTFIILFNNLIPISLL). The Cytoplasmic segment spans residues 361–866 (VTLEVVKFTQ…KCILYCFYKN (506 aa)). Aspartate 409 acts as the 4-aspartylphosphate intermediate in catalysis. Aspartate 409, lysine 410, and threonine 411 together coordinate ATP. Mg(2+) is bound at residue aspartate 409. Mg(2+) is bound at residue threonine 411. Serine 443 is modified (phosphoserine). Residues glutamate 508, phenylalanine 549, lysine 572, arginine 605, threonine 685, glycine 686, aspartate 687, 741-748 (ALIIDGKT), arginine 775, and lysine 781 each bind ATP. Aspartate 801 is a Mg(2+) binding site. ATP is bound by residues asparagine 804 and aspartate 805. Residue aspartate 805 coordinates Mg(2+). Residues 867-887 (IVLYIIEIWFAFVNGFSGQIL) traverse the membrane as a helical segment. At 888 to 890 (FER) the chain is on the exoplasmic loop side. A helical membrane pass occupies residues 891–911 (WCIGLYNVMFTAMPPLTLGIF). Topologically, residues 912 to 939 (ERSCRKENMLKYPELYKTSQNALDFNTK) are cytoplasmic. The helical transmembrane segment at 940–960 (VFWVHCLNGLFHSVILFWFPL) threads the bilayer. Residues 961-977 (KALQYGTVFGNGKTSDY) are Exoplasmic loop-facing. The helical transmembrane segment at 978-998 (LLLGNFVYTFVVITVCLKAGL) threads the bilayer. Residues 999-1008 (ETSYWTWFSH) lie on the Cytoplasmic side of the membrane. A helical transmembrane segment spans residues 1009–1029 (IAIWGSIALWVVFFGIYSSLW). Over 1030–1044 (PAVPMAPDMSGEAAM) the chain is Exoplasmic loop. The helical transmembrane segment at 1045 to 1065 (LFSSGVFWVGLLSIPVASLLL) threads the bilayer. Topologically, residues 1066–1164 (DVLYKVIKRT…DTTKQRPDEW (99 aa)) are cytoplasmic. 1095 to 1102 (GAVVLGKS) provides a ligand contact to ATP. Serine 1126 carries the phosphoserine modification.

It belongs to the cation transport ATPase (P-type) (TC 3.A.3) family. Type IV subfamily. Component of a P4-ATPase flippase complex which consists of a catalytic alpha subunit and an accessory beta subunit. Interacts with TMEM30A to form a flippase complex; this complex forms an intermediate phosphoenzyme. Interacts with TMEM30B; this interaction is reported conflictingly. Mg(2+) is required as a cofactor. Post-translationally, cleaved by calpain in a caspase- and calcium influx-dependent manner only during platelet apoptosis and may lead to inactivation. As to expression, found in most tissues except liver and testis. Most abundant in brain and lung. Also detected in fetal tissues. Isoform 1 is expressed in brain. Isoform 2 and isoform 3 are expressed in reticulocytes. Expressed in mouse hippocampus in both dentate gyrus (DG) and the CA3 regions. Expressed in both neuronal as well as non-neuronal cells within the DG. Highly expressed in platelets.

It localises to the cytoplasmic vesicle. The protein localises to the secretory vesicle. The protein resides in the chromaffin granule membrane. Its subcellular location is the cytoplasmic granule. It is found in the cell membrane. It localises to the endoplasmic reticulum. The protein localises to the golgi apparatus. The protein resides in the endomembrane system. The catalysed reaction is ATP + H2O + phospholipidSide 1 = ADP + phosphate + phospholipidSide 2.. The enzyme catalyses a 1,2-diacyl-sn-glycero-3-phospho-L-serine(out) + ATP + H2O = a 1,2-diacyl-sn-glycero-3-phospho-L-serine(in) + ADP + phosphate + H(+). Its activity is regulated as follows. ATPase activity is stimulated by phosphatidylserine (PS) and minimally by phosphatidylethanolamine (PE). ATPase activity is inhibited by the vanadate and by the presence of calcium. Catalytic component of a P4-ATPase flippase complex which catalyzes the hydrolysis of ATP coupled to the transport of aminophospholipids from the outer to the inner leaflet of various membranes and ensures the maintenance of asymmetric distribution of phospholipids. Phospholipid translocation also seems to be implicated in vesicle formation and in uptake of lipid signaling molecules. In vitro, its ATPase activity is selectively and stereospecifically stimulated by phosphatidylserine (PS). The flippase complex ATP8A1:TMEM30A seems to play a role in regulation of cell migration probably involving flippase-mediated translocation of phosphatidylethanolamine (PE) at the cell membrane. Acts as aminophospholipid translocase at the cell membrane in neuronal cells; the activity is associated with hippocampus-dependent learning. May play a role in brain connectivity. This chain is Phospholipid-transporting ATPase IA, found in Mus musculus (Mouse).